The following is a 612-amino-acid chain: Probable serine/threonine-protein kinase WNK4 (612 aa).

The 258-residue stretch at 25–282 folds into the Protein kinase domain; the sequence is IRYNEVLGRG…AKELLQDPFL (258 aa). ATP contacts are provided by residues 105–108 and Lys-155; that span reads TELF. Residue Asp-172 is the Proton acceptor of the active site.

This sequence belongs to the protein kinase superfamily. Ser/Thr protein kinase family. WNK subfamily.

The enzyme catalyses L-seryl-[protein] + ATP = O-phospho-L-seryl-[protein] + ADP + H(+). It carries out the reaction L-threonyl-[protein] + ATP = O-phospho-L-threonyl-[protein] + ADP + H(+). This chain is Probable serine/threonine-protein kinase WNK4 (WNK4), found in Oryza sativa subsp. japonica (Rice).